The following is a 453-amino-acid chain: G-protein coupled receptor 39 (453 aa).

The Extracellular segment spans residues 1–34; the sequence is MASPSLPGSDCSQIIDHSHVPEFEVATWIKITLI. 2 cysteine pairs are disulfide-bonded: Cys11/Cys191 and Cys108/Cys210. 2 residues coordinate Zn(2+): His17 and His19. Residues 35–55 form a helical membrane-spanning segment; that stretch reads LVYLIIFVMGLLGNSATIRVT. Residues 56 to 69 are Cytoplasmic-facing; sequence QVLQKKGYLQKEVT. Residues 70–89 form a helical membrane-spanning segment; sequence DHMVSLACSDILVFLIGMPM. The Extracellular segment spans residues 90-109; the sequence is EFYSIIWNPLTTSSYTLSCK. Residues 110-131 form a helical membrane-spanning segment; sequence LHTFLFEACSYATLLHVLTLSF. The Cytoplasmic portion of the chain corresponds to 132–151; it reads ERYIAICHPFRYKAVSGPCQ. A helical membrane pass occupies residues 152-172; the sequence is VKLLIGFVWVTSALVALPLLF. Residues 173 to 217 are Extracellular-facing; sequence AMGTEYPLVNVPSHRGLTCNRSSTRHHEQPETSNMSICTNLSSRW. N-linked (GlcNAc...) asparagine glycosylation is found at Asn192, Asn206, and Asn212. Residues 218-242 form a helical membrane-spanning segment; that stretch reads TVFQSSIFGAFVVYLVVLLSVAFMC. Residues 243-283 lie on the Cytoplasmic side of the membrane; that stretch reads WNMMQVLMKSQKGSLAGGTRPPQLRKSESEESRTARRQTII. The segment at 255 to 274 is disordered; the sequence is GSLAGGTRPPQLRKSESEES. The chain crosses the membrane as a helical span at residues 284-305; sequence FLRLIVVTLAVCWMPNQIRRIM. Residues 306 to 323 are Extracellular-facing; sequence AAAKPKHDWTRSYFRAYM. Residues 324-344 traverse the membrane as a helical segment; the sequence is ILLPFSETFFYLSSVINPLLY. Residues 345 to 453 are Cytoplasmic-facing; the sequence is TVSSQQFRRV…AENGFQEHEV (109 aa). A Phosphoserine modification is found at Ser396. The interval 415-453 is disordered; it reads SEAEPQSKSQSLSLESLEPNSGAKPANSAAENGFQEHEV. The segment covering 418 to 435 has biased composition (low complexity); sequence EPQSKSQSLSLESLEPNS.

It belongs to the G-protein coupled receptor 1 family. Interacts with HTR1A. Interacts with GALR1. As to expression, expressed in many tissues, including the stomach, intestine and hypothalamus.

The protein localises to the cell membrane. Its function is as follows. Zinc-sensing receptor that can sense changes in extracellular Zn(2+), mediate Zn(2+) signal transmission, and participates in the regulation of numerous physiological processes including glucose homeostasis regulation, gastrointestinal mobility, hormone secretion and cell death. Activation by Zn(2+) in keratinocytes increases the intracellular concentration of Ca(2+) and activates the ERK/MAPK and PI3K/AKT signaling pathways leading to epithelial repair. Plays an essential role in normal wound healing by inducing the production of cytokines including the major inflammatory cytokine IL6 via the PKC/MAPK/CEBPB pathway. Regulates adipose tissue metabolism, especially lipolysis, and regulates the function of lipases, such as hormone-sensitive lipase and adipose triglyceride lipase. Plays a role in the inhibition of cell death and protects against oxidative, endoplasmic reticulum and mitochondrial stress by inducing secretion of the cytoprotective pigment epithelium-derived growth factor (PEDF) and probably other protective transcripts in a GNA13/RHOA/SRE-dependent manner. Forms dynamic heteroreceptor complexes with HTR1A and GALR1 depending on cell type or specific physiological states, resulting in signaling diversity: HTR1A-GPR39 shows additive increase in signaling along the serum response element (SRE) and NF-kappa-B pathways while GALR1 acts as an antagonist blocking SRE. This is G-protein coupled receptor 39 (GPR39) from Homo sapiens (Human).